The primary structure comprises 1001 residues: Ankyrin repeat domain-containing protein 35 (1001 aa).

ANK repeat units follow at residues 53 to 82, 86 to 115, 119 to 148, 152 to 181, 185 to 214, and 218 to 247; these read NGQSPFHLAASKGLTECLTILLANGADINS, DGSTALHLATISCQPQCVKVLLQHGANEDA, ENRSPLHWAASSGCASSVLLLCDHEAFLDV, DGRTPLMIASLGGHAAICSQLLQRGARVNV, NDKSALILACEKGSAEVAELLLSHGADAGA, and TGHDALHYALHTQDKALWRHLQQALSRRRR. 3 disordered regions span residues 256-296, 352-482, and 559-601; these read PDLA…PCSE, PRAS…VAEP, and PEVP…ALGG. A compositionally biased stretch (acidic residues) spans 281–295; that stretch reads PEEEQEEKEDEDPCS. The stretch at 295–344 forms a coiled coil; it reads SEEWRWKYEEERRKVVRLEQELVQKTEECKTQAAAYLDLENQIREQAQEL. Residues 402 to 422 are compositionally biased toward basic and acidic residues; sequence KKAEDSAPGKIQYEVHGRSQP. Residues 423 to 434 are compositionally biased toward low complexity; that stretch reads EEQGPPQSPASE. Positions 440-450 are enriched in polar residues; it reads TGQQLTTNGAQ. The span at 579–588 shows a compositional bias: basic and acidic residues; it reads KQDEEKEKRV. 3 coiled-coil regions span residues 610–696, 733–810, and 851–968; these read KGQL…LLAS, ISTL…IGKL, and QELK…HEEI. Residues 879–902 are disordered; the sequence is RRSGDLAAQAAEQERQASEMRGRS. Basic and acidic residues predominate over residues 890–902; it reads EQERQASEMRGRS.

In Homo sapiens (Human), this protein is Ankyrin repeat domain-containing protein 35 (ANKRD35).